The chain runs to 757 residues: Catalase-peroxidase (757 aa).

Residues 1–28 (MENQSNDISKCPFHNGSMDNQAASGTKN) are disordered. A compositionally biased stretch (polar residues) spans 17–28 (SMDNQAASGTKN). Positions 100 to 247 (WHSAGTYRVH…LAAVQMGLIY (148 aa)) form a cross-link, tryptophyl-tyrosyl-methioninium (Trp-Tyr) (with M-273). His-101 functions as the Proton acceptor in the catalytic mechanism. The segment at residues 247–273 (YVNPEGPDGNPDPILAAKDIRDTFGRM) is a cross-link (tryptophyl-tyrosyl-methioninium (Tyr-Met) (with W-100)). Heme b is bound at residue His-288.

Belongs to the peroxidase family. Peroxidase/catalase subfamily. Homodimer or homotetramer. It depends on heme b as a cofactor. In terms of processing, formation of the three residue Trp-Tyr-Met cross-link is important for the catalase, but not the peroxidase activity of the enzyme.

The enzyme catalyses H2O2 + AH2 = A + 2 H2O. It carries out the reaction 2 H2O2 = O2 + 2 H2O. In terms of biological role, bifunctional enzyme with both catalase and broad-spectrum peroxidase activity. In Flavobacterium johnsoniae (strain ATCC 17061 / DSM 2064 / JCM 8514 / BCRC 14874 / CCUG 350202 / NBRC 14942 / NCIMB 11054 / UW101) (Cytophaga johnsonae), this protein is Catalase-peroxidase.